Reading from the N-terminus, the 766-residue chain is Darlin (766 aa).

ARM repeat units lie at residues 82–119 (QLFE…NLTY), 167–208 (DFIQ…NLVD), 423–464 (EPNC…NLTL), and 465–537 (PTIN…ASMD). Residues 561 to 585 (EEKEKTIEKTDEKTDEKTNEKKQSK) are disordered. An ARM 5 repeat occupies 610–649 (HQEKMKQLIEESVEPFFSLLQSPFPILQVEGAKGLVLLIK).

Belongs to the RAP1GDS1 family. Binds to small GTPases racE, racC but not rab21. Binds preferentially to GDP-bound racE.

Part of a signaling pathway that initiates the aggregation and leads to the formation of aggregation centers or streams. Not essential for cytokinesis, pinocytosis or phagocytosis. Not essential for development, except in starvation-induced aggregation. The protein is Darlin (darA) of Dictyostelium discoideum (Social amoeba).